The primary structure comprises 797 residues: Outer membrane protein assembly factor BamA (797 aa).

The first 19 residues, 1–19, serve as a signal peptide directing secretion; sequence MKKLLIASLLFGTTTTVFA. POTRA domains lie at 22–89, 90–170, 173–259, 262–341, and 344–418; these read FVAK…VVAK, SIIS…INED, AKLA…VNEG, YDLR…VDAG, and LTVR…VKER.

The protein belongs to the BamA family. As to quaternary structure, part of the Bam complex.

It localises to the cell outer membrane. Its function is as follows. Part of the outer membrane protein assembly complex, which is involved in assembly and insertion of beta-barrel proteins into the outer membrane. This is Outer membrane protein assembly factor BamA from Haemophilus influenzae.